A 198-amino-acid chain; its full sequence is Pyridoxal 5'-phosphate synthase subunit PdxT (198 aa).

Residue 49 to 51 participates in L-glutamine binding; it reads GES. Cys-81 functions as the Nucleophile in the catalytic mechanism. Residues Arg-113 and 141–142 contribute to the L-glutamine site; that span reads IR. Catalysis depends on charge relay system residues His-177 and Glu-179.

This sequence belongs to the glutaminase PdxT/SNO family. In terms of assembly, in the presence of PdxS, forms a dodecamer of heterodimers. Only shows activity in the heterodimer.

The enzyme catalyses aldehydo-D-ribose 5-phosphate + D-glyceraldehyde 3-phosphate + L-glutamine = pyridoxal 5'-phosphate + L-glutamate + phosphate + 3 H2O + H(+). The catalysed reaction is L-glutamine + H2O = L-glutamate + NH4(+). It functions in the pathway cofactor biosynthesis; pyridoxal 5'-phosphate biosynthesis. In terms of biological role, catalyzes the hydrolysis of glutamine to glutamate and ammonia as part of the biosynthesis of pyridoxal 5'-phosphate. The resulting ammonia molecule is channeled to the active site of PdxS. This chain is Pyridoxal 5'-phosphate synthase subunit PdxT, found in Mycobacterium avium (strain 104).